We begin with the raw amino-acid sequence, 476 residues long: Bifunctional protein GlmU (476 aa).

Positions 1-232 (MGDLAAIILA…PVEVMGVNDR (232 aa)) are pyrophosphorylase. Residues 9 to 12 (LAAG), K23, Q75, and 80 to 81 (GT) each bind UDP-N-acetyl-alpha-D-glucosamine. D105 contacts Mg(2+). UDP-N-acetyl-alpha-D-glucosamine-binding residues include G142, E157, N172, and N230. N230 contributes to the Mg(2+) binding site. Positions 233-253 (AQLAEAGRFARQRINRELMLD) are linker. Residues 254-476 (GVTIVDPAAT…DGWKLKQRDQ (223 aa)) are N-acetyltransferase. Residues R353 and K371 each contribute to the UDP-N-acetyl-alpha-D-glucosamine site. The Proton acceptor role is filled by H383. Residues Y386 and N397 each contribute to the UDP-N-acetyl-alpha-D-glucosamine site. Acetyl-CoA contacts are provided by residues 406-407 (NY), S425, A443, and R460.

The protein in the N-terminal section; belongs to the N-acetylglucosamine-1-phosphate uridyltransferase family. In the C-terminal section; belongs to the transferase hexapeptide repeat family. Homotrimer. Mg(2+) is required as a cofactor.

It is found in the cytoplasm. The catalysed reaction is alpha-D-glucosamine 1-phosphate + acetyl-CoA = N-acetyl-alpha-D-glucosamine 1-phosphate + CoA + H(+). The enzyme catalyses N-acetyl-alpha-D-glucosamine 1-phosphate + UTP + H(+) = UDP-N-acetyl-alpha-D-glucosamine + diphosphate. The protein operates within nucleotide-sugar biosynthesis; UDP-N-acetyl-alpha-D-glucosamine biosynthesis; N-acetyl-alpha-D-glucosamine 1-phosphate from alpha-D-glucosamine 6-phosphate (route II): step 2/2. Its pathway is nucleotide-sugar biosynthesis; UDP-N-acetyl-alpha-D-glucosamine biosynthesis; UDP-N-acetyl-alpha-D-glucosamine from N-acetyl-alpha-D-glucosamine 1-phosphate: step 1/1. It participates in bacterial outer membrane biogenesis; LPS lipid A biosynthesis. Its function is as follows. Catalyzes the last two sequential reactions in the de novo biosynthetic pathway for UDP-N-acetylglucosamine (UDP-GlcNAc). The C-terminal domain catalyzes the transfer of acetyl group from acetyl coenzyme A to glucosamine-1-phosphate (GlcN-1-P) to produce N-acetylglucosamine-1-phosphate (GlcNAc-1-P), which is converted into UDP-GlcNAc by the transfer of uridine 5-monophosphate (from uridine 5-triphosphate), a reaction catalyzed by the N-terminal domain. This is Bifunctional protein GlmU from Geobacter metallireducens (strain ATCC 53774 / DSM 7210 / GS-15).